The chain runs to 155 residues: S-ribosylhomocysteine lyase (155 aa).

Residues His57, His61, and Cys124 each coordinate Fe cation.

The protein belongs to the LuxS family. As to quaternary structure, homodimer. Fe cation serves as cofactor.

It catalyses the reaction S-(5-deoxy-D-ribos-5-yl)-L-homocysteine = (S)-4,5-dihydroxypentane-2,3-dione + L-homocysteine. Functionally, involved in the synthesis of autoinducer 2 (AI-2) which is secreted by bacteria and is used to communicate both the cell density and the metabolic potential of the environment. The regulation of gene expression in response to changes in cell density is called quorum sensing. Catalyzes the transformation of S-ribosylhomocysteine (RHC) to homocysteine (HC) and 4,5-dihydroxy-2,3-pentadione (DPD). The polypeptide is S-ribosylhomocysteine lyase (Listeria monocytogenes serotype 4a (strain HCC23)).